A 500-amino-acid chain; its full sequence is NAD(P)H-quinone oxidoreductase chain 4, chloroplastic (500 aa).

The next 14 membrane-spanning stretches (helical) occupy residues 4–24, 37–57, 84–104, 111–129, 134–154, 167–187, 208–228, 242–262, 272–292, 305–325, 330–350, 374–396, 416–436, and 462–482; these read FPWL…IFFF, ICIC…HFQL, GLSI…TLAA, SRLF…IGSF, LLLF…LLSM, FILY…GMGL, ALEI…SPII, HYST…YGLV, AHSI…IYAA, IAYS…SITD, GAIL…FLAG, IFTM…GFVA, ILIT…SLSM, and LFVS…PDFV.

The protein belongs to the complex I subunit 4 family.

It is found in the plastid. Its subcellular location is the chloroplast thylakoid membrane. The catalysed reaction is a plastoquinone + NADH + (n+1) H(+)(in) = a plastoquinol + NAD(+) + n H(+)(out). The enzyme catalyses a plastoquinone + NADPH + (n+1) H(+)(in) = a plastoquinol + NADP(+) + n H(+)(out). This Liriodendron tulipifera (Tuliptree) protein is NAD(P)H-quinone oxidoreductase chain 4, chloroplastic.